A 121-amino-acid polypeptide reads, in one-letter code: Ribosome-binding factor A (121 aa).

Belongs to the RbfA family. Monomer. Binds 30S ribosomal subunits, but not 50S ribosomal subunits or 70S ribosomes.

It localises to the cytoplasm. Its function is as follows. One of several proteins that assist in the late maturation steps of the functional core of the 30S ribosomal subunit. Associates with free 30S ribosomal subunits (but not with 30S subunits that are part of 70S ribosomes or polysomes). Required for efficient processing of 16S rRNA. May interact with the 5'-terminal helix region of 16S rRNA. The polypeptide is Ribosome-binding factor A (Finegoldia magna (strain ATCC 29328 / DSM 20472 / WAL 2508) (Peptostreptococcus magnus)).